A 306-amino-acid polypeptide reads, in one-letter code: Arylesterase (306 aa).

Residues H82 to G84 carry the Involved in the stabilization of the negatively charged intermediate by the formation of the oxyanion hole motif. Active-site residues include S156, D251, and H281.

Monomer.

The catalysed reaction is a phenyl acetate + H2O = a phenol + acetate + H(+). It carries out the reaction An aryl dialkyl phosphate + H2O = dialkyl phosphate + an aryl alcohol.. Its activity is regulated as follows. Completely inhibited by chemical modifiers that are specific to Cys (HgCl(2) and p-chloromercuribenzoic acid), His (diethyl pyrocarbonate) and Ser (diisopropyl fluorophosphate and phenylmethanesulfonyl fluoride). No significant effect with chemical modifiers specific to Lys (pyridoxal 5'-phosphate) and Arg (phenylglyoxal). Not inhibited by inhibitors of A-esterases (paraoxon) or C-esterases (physostigmine/eserine). Activity is also not effected by incubation with 5 mM divalent cations for 30 minutes at 30 degrees Celsius or with 10 mM EDTA for 60 minutes at 75 degrees Celsius. Its function is as follows. Has a broad substrate specificity. Hydrolyzes various p-nitrophenyl phosphates, aromatic esters and p-nitrophenyl fatty acids in vitro. Most active against paraoxon, phenyl acetate and p-nitrophenyl caproate (C6), respectively. Also has tributyrinase activity, but shows no hydrolytic activity toward other triacylglycerols including tricaprylin, trimyristin, tripalmitin or triolein in vitro. This Saccharolobus solfataricus (Sulfolobus solfataricus) protein is Arylesterase.